A 241-amino-acid chain; its full sequence is 7-cyano-7-deazaguanine synthase (241 aa).

15–25 contributes to the ATP binding site; it reads FSGGQDSTTTL. C203, C218, C221, and C224 together coordinate Zn(2+).

It belongs to the QueC family. Requires Zn(2+) as cofactor.

It catalyses the reaction 7-carboxy-7-deazaguanine + NH4(+) + ATP = 7-cyano-7-deazaguanine + ADP + phosphate + H2O + H(+). The protein operates within purine metabolism; 7-cyano-7-deazaguanine biosynthesis. Its function is as follows. Catalyzes the ATP-dependent conversion of 7-carboxy-7-deazaguanine (CDG) to 7-cyano-7-deazaguanine (preQ(0)). In Azorhizobium caulinodans (strain ATCC 43989 / DSM 5975 / JCM 20966 / LMG 6465 / NBRC 14845 / NCIMB 13405 / ORS 571), this protein is 7-cyano-7-deazaguanine synthase.